A 495-amino-acid chain; its full sequence is Heterogeneous nuclear ribonucleoprotein Q (495 aa).

The span at 1–10 (MSDARDNDDR) shows a compositional bias: basic and acidic residues. A disordered region spans residues 1 to 101 (MSDARDNDDR…KPPSPIDDED (101 aa)). Acidic residues-rich tracts occupy residues 11–46 (VDFE…DDDV) and 67–101 (MEDV…DDED). 3 consecutive RRM domains span residues 116–194 (SEVF…LSET), 196–278 (NRLF…WADP), and 292–368 (KALY…LAKP). Positions 452–495 (MPMAAAPPQRPRRNDRNNGSSGGSGRDNSHEHDGNRGGRRYRPY) are disordered. Over residues 478 to 487 (DNSHEHDGNR) the composition is skewed to basic and acidic residues.

Interacts with LHP1 in the nucleus on a common set of chromatin regions. In terms of tissue distribution, predominantly expressed in vascular and meristematic tissues. Expressed throughout development in seedlings, roots, leaves, floral buds and siliques.

Its subcellular location is the nucleus. It localises to the cytoplasm. The protein localises to the microsome. In terms of biological role, transcriptional activator that binds DNA on GAGA-like motif and 5'-(C/G)ACGTG(G/T)C(A/G)-3' consensus motif in the promoters of target genes. Component of ribonucleosomes, which are complexes of at least 20 other different heterogeneous nuclear ribonucleoproteins (hnRNP). hnRNP play an important role in processing of precursor mRNA in the nucleus. Required during flower development and for cell fate determination. Acts both as an antagonist and as a promoter of polycomb LHP1 gene regulation activity, depending of target genes, to regulate the transcription of stress-responsive and flowering genes. May regulate histone H3 trimethylation on lysine 27 (H3K27me3). Recognizes and binds histone H3 tails methylated at 'Lys-4' (H3K4me) and acetylated at 'Lys-9' (H3K9ac), leading to epigenetic activation. When in complex with LHP1, recognizes and binds histone H3 tails methylated at 'Lys-4' (H3K4me) and 'Lys-27' (H3K27me), mostly corresponding to stress-responsive genes. May function as a suppressor of cell-autonomous immune responses involving glucosinolates, salicylic acid (SA) and jasmonic acid (JA) pathways toward pathogenic bacteria and fungi. The sequence is that of Heterogeneous nuclear ribonucleoprotein Q from Arabidopsis thaliana (Mouse-ear cress).